A 282-amino-acid chain; its full sequence is NADPH-dependent 7-cyano-7-deazaguanine reductase (282 aa).

88 to 90 (IES) is a binding site for substrate. NADPH is bound at residue 90-91 (SK). The active-site Thioimide intermediate is cysteine 190. The Proton donor role is filled by aspartate 197. Position 229–230 (229–230 (HE)) interacts with substrate. 258 to 259 (RG) provides a ligand contact to NADPH.

The protein belongs to the GTP cyclohydrolase I family. QueF type 2 subfamily. In terms of assembly, homodimer.

The protein resides in the cytoplasm. The enzyme catalyses 7-aminomethyl-7-carbaguanine + 2 NADP(+) = 7-cyano-7-deazaguanine + 2 NADPH + 3 H(+). It functions in the pathway tRNA modification; tRNA-queuosine biosynthesis. Catalyzes the NADPH-dependent reduction of 7-cyano-7-deazaguanine (preQ0) to 7-aminomethyl-7-deazaguanine (preQ1). The sequence is that of NADPH-dependent 7-cyano-7-deazaguanine reductase from Salmonella paratyphi B (strain ATCC BAA-1250 / SPB7).